A 435-amino-acid chain; its full sequence is UDP-N-acetylmuramoylalanine--D-glutamate ligase (435 aa).

An ATP-binding site is contributed by 114–120 (GSNGKST).

Belongs to the MurCDEF family.

Its subcellular location is the cytoplasm. The enzyme catalyses UDP-N-acetyl-alpha-D-muramoyl-L-alanine + D-glutamate + ATP = UDP-N-acetyl-alpha-D-muramoyl-L-alanyl-D-glutamate + ADP + phosphate + H(+). Its pathway is cell wall biogenesis; peptidoglycan biosynthesis. In terms of biological role, cell wall formation. Catalyzes the addition of glutamate to the nucleotide precursor UDP-N-acetylmuramoyl-L-alanine (UMA). This Haemophilus ducreyi (strain 35000HP / ATCC 700724) protein is UDP-N-acetylmuramoylalanine--D-glutamate ligase.